The primary structure comprises 397 residues: Acetyl-CoA acetyltransferase, cytosolic (397 aa).

Position 1 is an N-acetylmethionine (M1). C92 serves as the catalytic Acyl-thioester intermediate. N6-acetyllysine is present on K200. CoA contacts are provided by R223 and S226. Residues K233 and K235 each carry the N6-acetyllysine modification. S252 is a CoA binding site. C383 acts as the Proton donor/acceptor in catalysis.

It belongs to the thiolase-like superfamily. Thiolase family. As to quaternary structure, homotetramer.

It is found in the cytoplasm. The protein resides in the cytosol. The enzyme catalyses 2 acetyl-CoA = acetoacetyl-CoA + CoA. It functions in the pathway lipid metabolism; fatty acid metabolism. Involved in the biosynthetic pathway of cholesterol. The protein is Acetyl-CoA acetyltransferase, cytosolic (ACAT2) of Homo sapiens (Human).